We begin with the raw amino-acid sequence, 208 residues long: LexA repressor (208 aa).

Positions 28 to 48 (VREIGEAVGLASSSTVHGHLA) form a DNA-binding region, H-T-H motif. Residues serine 130 and lysine 168 each act as for autocatalytic cleavage activity in the active site.

Belongs to the peptidase S24 family. Homodimer.

The catalysed reaction is Hydrolysis of Ala-|-Gly bond in repressor LexA.. Its function is as follows. Represses a number of genes involved in the response to DNA damage (SOS response), including recA and lexA. In the presence of single-stranded DNA, RecA interacts with LexA causing an autocatalytic cleavage which disrupts the DNA-binding part of LexA, leading to derepression of the SOS regulon and eventually DNA repair. The polypeptide is LexA repressor (Shouchella clausii (strain KSM-K16) (Alkalihalobacillus clausii)).